A 185-amino-acid chain; its full sequence is Ribosome-recycling factor (185 aa).

A disordered region spans residues 142–165; it reads IVKDGDAGEDEGSRAEKELDGLTK.

It belongs to the RRF family.

It localises to the cytoplasm. Its function is as follows. Responsible for the release of ribosomes from messenger RNA at the termination of protein biosynthesis. May increase the efficiency of translation by recycling ribosomes from one round of translation to another. The protein is Ribosome-recycling factor of Renibacterium salmoninarum (strain ATCC 33209 / DSM 20767 / JCM 11484 / NBRC 15589 / NCIMB 2235).